Here is a 695-residue protein sequence, read N- to C-terminus: Elongation factor G (695 aa).

One can recognise a tr-type G domain in the interval 8–282 (EKTRNIGIMA…AVLDYLPAPT (275 aa)). Residues 17–24 (AHIDAGKT), 81–85 (DTPGH), and 135–138 (NKMD) contribute to the GTP site.

It belongs to the TRAFAC class translation factor GTPase superfamily. Classic translation factor GTPase family. EF-G/EF-2 subfamily.

Its subcellular location is the cytoplasm. Its function is as follows. Catalyzes the GTP-dependent ribosomal translocation step during translation elongation. During this step, the ribosome changes from the pre-translocational (PRE) to the post-translocational (POST) state as the newly formed A-site-bound peptidyl-tRNA and P-site-bound deacylated tRNA move to the P and E sites, respectively. Catalyzes the coordinated movement of the two tRNA molecules, the mRNA and conformational changes in the ribosome. The chain is Elongation factor G from Listeria welshimeri serovar 6b (strain ATCC 35897 / DSM 20650 / CCUG 15529 / CIP 8149 / NCTC 11857 / SLCC 5334 / V8).